The primary structure comprises 535 residues: MFLSIKRKIIEPYLVIRQSLAPLKLSRWQLTKIMARTAFDGLPSGTLIVLAALSLALLVAVLRIKSQERTRSKEIPGLPVVKRNHLHYLDIVREGRELYPGQPFMAVNKRHSLVVFPPSCFNEIKRLPAHTASAKKFFNTTNYGDWSHVGEESPELIKSVIADLTRSLPARVHTRQDECRDVFDEVVGRRREWKEFPLLMTTFEIITQINACSFVGKTLATNRSWVRSVMMLPVFIHVGVMLLDACPLIVRPFMAYLTFLPSIKNRWDLTRMLAPVLKKDLEEYHEAKDKKEFLRPRAEGKVPFTGFLLSHYKSAQASLKQLISDYIHLSFDSTPNTAAVMFHALCELAIHPEAVEALRQELDEVMVDGKLPPTHLQELRKMDSFLRECFRLHPFGIFTLQRRVEQPVQLSVGPLLPPGTLMAVDGQAIDGSSELWPNPEKFDVYRFYNLRQKLGNENQYHFATTSPDSPGWGDGTQACPGRFFAVNTLKIAMAHFLRNYDIEIKPECLPLKTKPMPSGFFSPDDRAIARIRART.

The helical transmembrane segment at Leu42–Leu62 threads the bilayer. N-linked (GlcNAc...) asparagine glycosylation is found at Asn139 and Asn222. Cys479 is a binding site for heme.

It belongs to the cytochrome P450 family. Heme serves as cofactor.

The protein localises to the membrane. It participates in mycotoxin biosynthesis. Functionally, cytochrome P450 monooxygenase; part of the gene cluster that mediates the biosynthesis of the mycotoxin pyrichalasin H, a tyrosine-derived cytochalasan that inhibits the growth of rice seedlings, but also inhibits lymphocyte capping and actin polymerization and alters cell morphology. Pyrichalasin H is indicated as the responsible agent for the genus-specific pathogenicity of M.grisea toward crabgrass. The first step in the pathway is catalyzed by the O-methyltransferase pyiA which methylates free tyrosine to generate the precursor O-methyltyrosine. The hybrid PKS-NRPS pyiS, assisted by the enoyl reductase pyiC, are responsible for fusion of the O-methyltyrosine precursor and the polyketide backbone. The polyketide synthase module (PKS) of pyiS is responsible for the synthesis of the polyketide backbone and the downstream nonribosomal peptide synthetase (NRPS) amidates the carboxyl end of the polyketide with the O-methyltyrosine precursor. As the NRPS A-domain demonstrates substrate tolerance, pyiS can also use phenylalanine, tyrosine and even para-chlorophenylalanine as amino acid precursor, which leads to the production of novel cytochalasans, including halogenated cytochalasans. Because pyiS lacks a designated enoylreductase (ER) domain, the required activity is provided the enoyl reductase pyiC. Reduction by the hydrolyase pyiE leads to 1,5-dihydropyrrolone, which is substrate for dehydration and intra-molecular Diels-Alder cyclization by the Diels-Alderase pyiF to yield the required isoindolone-fused macrocycle. The tailoring cytochrome P450 monooxygenases piyD and piyG catalyze the hydroxylation at C-18 and C-7, respectivily, whereas the short-chain dehydrogenase/reductase pyiH reduces the carbonyl at C-21 in preparation for the transfer of an acetyl group by the acetyltransferase pyiB. These 3 reactions whose order is not clear yet, lead to the production of O-methylpyrichalasin J, a deacetylated pyrichalasin H. Finally, pyiB to converts O-methylpyrichalasin J into the final product pyrichalasin H via acetylation of C-21. The chain is Pyrichalasin C-18 hydroxylase from Pyricularia grisea (Crabgrass-specific blast fungus).